The sequence spans 212 residues: ATP phosphoribosyltransferase (212 aa).

This sequence belongs to the ATP phosphoribosyltransferase family. Short subfamily. As to quaternary structure, heteromultimer composed of HisG and HisZ subunits.

Its subcellular location is the cytoplasm. The enzyme catalyses 1-(5-phospho-beta-D-ribosyl)-ATP + diphosphate = 5-phospho-alpha-D-ribose 1-diphosphate + ATP. The protein operates within amino-acid biosynthesis; L-histidine biosynthesis; L-histidine from 5-phospho-alpha-D-ribose 1-diphosphate: step 1/9. Catalyzes the condensation of ATP and 5-phosphoribose 1-diphosphate to form N'-(5'-phosphoribosyl)-ATP (PR-ATP). Has a crucial role in the pathway because the rate of histidine biosynthesis seems to be controlled primarily by regulation of HisG enzymatic activity. This chain is ATP phosphoribosyltransferase, found in Clostridium botulinum (strain ATCC 19397 / Type A).